We begin with the raw amino-acid sequence, 372 residues long: Chaperone protein DnaJ (372 aa).

The 66-residue stretch at 5 to 70 (DYYDLLEVGR…EKRAGYDRYG (66 aa)) folds into the J domain. Residues 134–212 (GIQAPIHYVT…CGGSGRRRDE (79 aa)) form a CR-type zinc finger. Residues cysteine 147, cysteine 150, cysteine 164, cysteine 167, cysteine 186, cysteine 189, cysteine 200, and cysteine 203 each contribute to the Zn(2+) site. CXXCXGXG motif repeat units follow at residues 147–154 (CDTCQGTG), 164–171 (CHTCQGSG), 186–193 (CTTCYGEG), and 200–207 (CKKCGGSG).

The protein belongs to the DnaJ family. Homodimer. Requires Zn(2+) as cofactor.

The protein resides in the cytoplasm. Functionally, participates actively in the response to hyperosmotic and heat shock by preventing the aggregation of stress-denatured proteins and by disaggregating proteins, also in an autonomous, DnaK-independent fashion. Unfolded proteins bind initially to DnaJ; upon interaction with the DnaJ-bound protein, DnaK hydrolyzes its bound ATP, resulting in the formation of a stable complex. GrpE releases ADP from DnaK; ATP binding to DnaK triggers the release of the substrate protein, thus completing the reaction cycle. Several rounds of ATP-dependent interactions between DnaJ, DnaK and GrpE are required for fully efficient folding. Also involved, together with DnaK and GrpE, in the DNA replication of plasmids through activation of initiation proteins. In Wolbachia sp. subsp. Drosophila simulans (strain wRi), this protein is Chaperone protein DnaJ.